The chain runs to 446 residues: MDSDFSHAFQKELTCVICLNYLVDPVTICCGHSFCRPCLCLSWEEAQSPANCPACREPSPKMDFKTNILLKNLVTIARKASLWQFLSSEKQICGTHRQTKKMFCDMDKSLLCLLCSNSQEHGAHKHYPIEEAAEEDREKLLKQMRILWKKIQENQRNLYEERRTAFLLRGDVVLRAQMIRNEYRKLHPVLHKEEKQHLERLNKEYQEIFQQLQRSWVKMDQKSKHLKEMYQELMEMCHKPEVELLQDLGDIVARSESVLLHMPQPVNPELTAGPITGLVYRLNRFRVEISFHFEVTNHNIRLFEDVRSWMFRRGPLNSDRSDYFAAWGARVFSFGKHYWELDVDNSCDWALGVCNNSWIRKNSTMVNSEDIFLLLCLKVDNHFNLLTTSPVFPHYIEKPLGRVGVFLDFESGSVSFLNVTKSSLIWSYPAGSLTFPVRPFFYTGHR.

The RING-type zinc finger occupies 15 to 56; it reads CVICLNYLVDPVTICCGHSFCRPCLCLSWEEAQSPANCPACR. A B box-type zinc finger spans residues 88–129; it reads SEKQICGTHRQTKKMFCDMDKSLLCLLCSNSQEHGAHKHYPI. Cys93, His96, Cys115, and His121 together coordinate Zn(2+). Coiled-coil stretches lie at residues 129-158 and 190-220; these read IEEAAEEDREKLLKQMRILWKKIQENQRNL and LHKEEKQHLERLNKEYQEIFQQLQRSWVKMD. The 178-residue stretch at 269–446 folds into the B30.2/SPRY domain; that stretch reads ELTAGPITGL…VRPFFYTGHR (178 aa).

Belongs to the TRIM/RBCC family.

The chain is Tripartite motif-containing protein 43B (TRIM43B) from Homo sapiens (Human).